An 86-amino-acid polypeptide reads, in one-letter code: Small ribosomal subunit protein uS17 (86 aa).

This sequence belongs to the universal ribosomal protein uS17 family. In terms of assembly, part of the 30S ribosomal subunit.

Its function is as follows. One of the primary rRNA binding proteins, it binds specifically to the 5'-end of 16S ribosomal RNA. The sequence is that of Small ribosomal subunit protein uS17 from Methylococcus capsulatus (strain ATCC 33009 / NCIMB 11132 / Bath).